Here is a 675-residue protein sequence, read N- to C-terminus: Protein PALS1 (675 aa).

The segment at 1 to 78 (MTTSHMNGHV…RREEEGKKQE (78 aa)) is disordered. The interval 1–345 (MTTSHMNGHV…QQIKPPPAKE (345 aa)) is required for the correct localization of PALS1 and PATJ at cell-cell contacts and the normal formation of tight junctions and adherens junctions. 2 stretches are compositionally biased toward basic and acidic residues: residues 10–36 (VTEE…REMA) and 54–78 (AQLE…KKQE). A phosphoserine mark is found at Ser14 and Ser25. The segment at 21–140 (VDLASPEEHQ…LKHIQHTLVD (120 aa)) is interaction with PARD6B. Phosphoserine occurs at positions 83 and 84. L27 domains follow at residues 120-177 (KILE…NKAS) and 179-235 (PFPL…MQLE). The segment at 181–243 (PLISNAQDLA…LEPFTDERVY (63 aa)) is interaction with LIN7C. One can recognise a PDZ domain in the interval 256–336 (IVRIEKARDI…TLTFVLIPSQ (81 aa)). Residues 345–417 (ETVIHVKAHF…PGKSFQQQRE (73 aa)) enclose the SH3 domain. In terms of domain architecture, Guanylate kinase-like spans 479–660 (KRPIILIGPQ…AYQELLRLIN (182 aa)). An ATP-binding site is contributed by 486 to 493 (GPQNCGQN).

Belongs to the MAGUK family. In terms of assembly, heterodimer with MPP1. Forms a heterotrimeric complex composed of PALS1, LIN7B and PATJ; the N-terminal L27 domain of PALS1 interacts with the L27 domain of PATJ and the C-terminal L27 domain of PALS1 interacts with the L27 domain of LIN7B. Component of a complex composed of PALS1, CRB1 and MPP4. Component of a complex whose core is composed of ARHGAP17, AMOT, PALS1, PATJ and PARD3/PAR3. Component of a complex composed of PALS1, CRB1 and EPB41L5. Within the complex, interacts (via HOOK domain) with EPB41L5 (via FERM domain), and interacts with CRB1 (via intracellular domain). Component of a complex composed of PALS1, MPP3 and CRB1; PALS1 acts as a bridging protein between MPP3 (via guanylate kinase-like domain) and CRB1. Component of a complex composed of CRB3, PALS1 and PATJ. As part of the Crumbs complex; interacts with WWP1, the interaction is enhanced by AMOTL2 and facilitates WWP1 localization to the plasma membrane. The Crumbs complex promotes monoubiquitination of AMOTL2 by WWP1, which activates the Hippo signaling pathway. Interacts (via PDZ domain) with PATJ (via N-terminus). Interacts with EZR. Interacts (via PDZ domain) with CRB1 (via C-terminal ERLI motif). While the PDZ domain is sufficient for interaction with CRB1, the adjacent SH3 and guanylate kinase-like domains are likely to contribute to a high affinity interaction. Interacts with WWTR1/TAZ (via WW domain). Interacts with MPP7. Interacts (via PDZ domain) with CRB3 (via C-terminus). Interacts with LIN7C. Interacts with MPDZ. Interacts with PARD6B. Interacts with SC6A1. Interacts with CDH5; the interaction promotes PALS1 localization to cell junctions and is required for CDH5-mediated vascular lumen formation and endothelial cell. Interacts with NPHP1 (via coiled coil and SH3 domains). Interacts with NPHP4. Interacts with CRB2.

The protein localises to the golgi apparatus. The protein resides in the cell membrane. It localises to the endomembrane system. Its subcellular location is the cell junction. It is found in the tight junction. The protein localises to the adherens junction. The protein resides in the cell projection. It localises to the axon. Its subcellular location is the perikaryon. It is found in the apical cell membrane. Functionally, plays a role in tight junction biogenesis and in the establishment of cell polarity in epithelial cells. Also involved in adherens junction biogenesis by ensuring correct localization of the exocyst complex protein EXOC4/SEC8 which allows trafficking of adherens junction structural component CDH1 to the cell surface. Plays a role through its interaction with CDH5 in vascular lumen formation and endothelial membrane polarity. Required during embryonic and postnatal retinal development. Required for the maintenance of cerebellar progenitor cells in an undifferentiated proliferative state, preventing premature differentiation, and is required for cerebellar histogenesis, fissure formation, cerebellar layer organization and cortical development. Plays a role in neuronal progenitor cell survival, potentially via promotion of mTOR signaling. Plays a role in the radial and longitudinal extension of the myelin sheath in Schwann cells. May modulate SC6A1/GAT1-mediated GABA uptake by stabilizing the transporter. May play a role in the T-cell receptor-mediated activation of NF-kappa-B. Required for localization of EZR to the apical membrane of parietal cells and may play a role in the dynamic remodeling of the apical cytoskeleton. Required for the normal polarized localization of the vesicular marker STX4. Required for the correct trafficking of the myelin proteins PMP22 and MAG. Involved in promoting phosphorylation and cytoplasmic retention of transcriptional coactivators YAP1 and WWTR1/TAZ which leads to suppression of TGFB1-dependent transcription of target genes such as CCN2/CTGF, SERPINE1/PAI1, SNAI1/SNAIL1 and SMAD7. In Canis lupus familiaris (Dog), this protein is Protein PALS1.